Reading from the N-terminus, the 213-residue chain is High frequency lysogenization protein HflD homolog (213 aa).

It belongs to the HflD family.

It is found in the cytoplasm. The protein localises to the cell inner membrane. The polypeptide is High frequency lysogenization protein HflD homolog (Klebsiella pneumoniae (strain 342)).